A 639-amino-acid chain; its full sequence is MTNSNNGNGGTNAAASGWLGFSLSPHMASSTMDEHHHVHHHQQQQQQQQQQQHHQQQQHGLFFPSVTTAAAAAAYGLAGDVVAATNGYYSQLASMPLKSDGSLCIMEALRRTDQDHHGPKLEDFLGAAQPAMALSLDNTSSFYYGGGGAAAAGHGQHGYLQACDLYGGPAAPSLVTAADEEAAAAAAAMASWVAARGAATAYATGAADANAAENVLPSATAAQHLHHPLALSMSSGSLSSCITAGEYGMAAVAAADGGRKRGGAGGGGQKQPVHHRKSIDTFGQRTSQYRGVTRHRWTGRYEAHLWDNSCKKEGQTRKGRQGGYDMEEKAARAYDLAALKYWGPSTHINFPLEDYQEELEEMKNMTRQEYVAHLRRKSSGFSRGASMYRGVTRHHQHGRWQARIGRVSGNKDLYLGTFSTQEEAAEAYDVAAIKFRGLNAVTNFDITRYDVDKIMASNTLLPADLARRNAATTTSKDDHSAAGAGAIVSVHSAADIAVADTLWKATTAPRQQQQHHDDVVLSGADQAAFSVLHDLVAVDAAAAHQQQQQQQHMSMSAASSLVTSLSNSREGSPDRGGGLSMLFAKPSPAVAASAQQQASTKLMAAPLPLGSWVSSPPASARPPAVSIAHMPLFAAWTDA.

Disordered stretches follow at residues 25 to 59 and 258 to 277; these read PHMA…QQQH and GRKR…HHRK. Residues 43–59 are compositionally biased toward low complexity; sequence QQQQQQQQQQHHQQQQH. 2 DNA-binding regions (AP2/ERF) span residues 288-351 and 387-445; these read QYRG…INFP and MYRG…TNFD. A compositionally biased stretch (low complexity) spans 547-561; it reads QQQQQHMSMSAASSL. The segment at 547–579 is disordered; it reads QQQQQHMSMSAASSLVTSLSNSREGSPDRGGGL.

It belongs to the AP2/ERF transcription factor family. AP2 subfamily. Highly expressed at the base of the stem. Expressed in stems. Expressed a low levels in crown roots and seeds. Expressed in the stem region where adventitious (crown) root initiation occurs.

The protein resides in the nucleus. Its function is as follows. Acts as a positive regulator of adventitious (crown) root formation by promoting its initiation. Promotes adventitious root initiation through repression of cytokinin signaling by positively regulating the two-component response regulator RR1. Regulated by the auxin response factor and transcriptional activator ARF23/ARF1. This Oryza sativa subsp. japonica (Rice) protein is AP2-like ethylene-responsive transcription factor CRL5.